The following is a 424-amino-acid chain: Adenylosuccinate synthetase 2 (424 aa).

GTP is bound by residues 11 to 17 and 39 to 41; these read GDEGKGK and GHT. Asp-12 acts as the Proton acceptor in catalysis. Mg(2+) is bound by residues Asp-12 and Gly-39. IMP is bound by residues 12 to 15, 37 to 40, Thr-127, Arg-141, Gln-223, Thr-238, and Arg-302; these read DEGK and NAGH. His-40 functions as the Proton donor in the catalytic mechanism. 298–304 contributes to the substrate binding site; sequence TTTGRGR. GTP is bound by residues Arg-304, 330 to 332, and 412 to 414; these read KLD and SVG.

This sequence belongs to the adenylosuccinate synthetase family. As to quaternary structure, homodimer. Requires Mg(2+) as cofactor.

It is found in the cytoplasm. It catalyses the reaction IMP + L-aspartate + GTP = N(6)-(1,2-dicarboxyethyl)-AMP + GDP + phosphate + 2 H(+). Its pathway is purine metabolism; AMP biosynthesis via de novo pathway; AMP from IMP: step 1/2. In terms of biological role, plays an important role in the de novo pathway of purine nucleotide biosynthesis. Catalyzes the first committed step in the biosynthesis of AMP from IMP. This is Adenylosuccinate synthetase 2 from Methanosarcina acetivorans (strain ATCC 35395 / DSM 2834 / JCM 12185 / C2A).